The sequence spans 347 residues: Gene 34 protein (347 aa).

The disordered stretch occupies residues 95 to 126 (GKGGEAGQRAGEDDERMDEGVPEEGAPRSPHP). The segment covering 106–116 (EDDERMDEGVP) has biased composition (acidic residues).

The protein belongs to the herpesviridae UL95 family.

This Equus caballus (Horse) protein is Gene 34 protein (34).